A 203-amino-acid chain; its full sequence is Flagellar transcriptional regulator FlhC (203 aa).

Residues Cys161, Cys164, Cys181, and Cys184 each contribute to the Zn(2+) site.

This sequence belongs to the FlhC family. As to quaternary structure, heterohexamer composed of two FlhC and four FlhD subunits. Each FlhC binds a FlhD dimer, forming a heterotrimer, and a hexamer assembles by dimerization of two heterotrimers. The cofactor is Zn(2+).

The protein resides in the cytoplasm. In terms of biological role, functions in complex with FlhD as a master transcriptional regulator that regulates transcription of several flagellar and non-flagellar operons by binding to their promoter region. Activates expression of class 2 flagellar genes, including fliA, which is a flagellum-specific sigma factor that turns on the class 3 genes. Also regulates genes whose products function in a variety of physiological pathways. The polypeptide is Flagellar transcriptional regulator FlhC (Cupriavidus necator (strain ATCC 17699 / DSM 428 / KCTC 22496 / NCIMB 10442 / H16 / Stanier 337) (Ralstonia eutropha)).